The primary structure comprises 630 residues: Triacylglycerol lipase ptl2 (630 aa).

The region spanning 251–442 (LCLSGGASFA…RTDIPLSELR (192 aa)) is the PNPLA domain. The GXSXG motif lies at 282 to 286 (GTSGG). The active-site Nucleophile is the S284. Residue D429 is the Proton acceptor of the active site.

The protein belongs to the PLPL family.

The protein resides in the lipid droplet. The catalysed reaction is a triacylglycerol + H2O = a diacylglycerol + a fatty acid + H(+). Its function is as follows. Lipid particle-localized triacylglycerol (TAG) lipase. The lipid droplet/particle is a lipid storage compartment which serves as a depot of energy and building blocks for membrane lipid biosynthesis. Involved in the mobilization of the non-polar storage lipids triacylglycerols (TAGs) from lipid particles by hydrolysis of TAGs, releasing and supplying specific fatty acids to the appropriate metabolic pathways. This Schizosaccharomyces pombe (strain 972 / ATCC 24843) (Fission yeast) protein is Triacylglycerol lipase ptl2 (ptl2).